Reading from the N-terminus, the 178-residue chain is Large ribosomal subunit protein eL20w (178 aa).

Belongs to the eukaryotic ribosomal protein eL20 family.

The sequence is that of Large ribosomal subunit protein eL20w (RPL18AD) from Arabidopsis thaliana (Mouse-ear cress).